Here is an 874-residue protein sequence, read N- to C-terminus: Probable inorganic carbon transporter subunit DabA (874 aa).

C398, D400, H580, and C595 together coordinate Zn(2+).

Belongs to the inorganic carbon transporter (TC 9.A.2) DabA family. In terms of assembly, forms a complex with DabB. Zn(2+) is required as a cofactor.

The protein localises to the cell membrane. Part of an energy-coupled inorganic carbon pump. The polypeptide is Probable inorganic carbon transporter subunit DabA (Bacillus cereus (strain ATCC 10987 / NRS 248)).